A 261-amino-acid chain; its full sequence is Putative cysteine protease YopT-like y4zC (261 aa).

Residues 1-15 are compositionally biased toward polar residues; that stretch reads MHSPISGSFTSSTQV. Disordered stretches follow at residues 1–48 and 54–73; these read MHSP…CPDK and SKPQ…ARPS. Residues 61-73 are compositionally biased toward low complexity; that stretch reads PNNPSTSSPARPS. Active-site residues include cysteine 93, histidine 205, and aspartate 220.

The protein belongs to the peptidase C58 family.

In terms of biological role, potential cysteine protease, which may play a central role after invasion of host cell. The chain is Putative cysteine protease YopT-like y4zC from Sinorhizobium fredii (strain NBRC 101917 / NGR234).